A 190-amino-acid chain; its full sequence is Transcription antitermination protein NusB (190 aa).

Residues 158-190 (AGTSEDHVPQREPAAGQLGQDDSNGGQVAAVCR) are disordered.

Belongs to the NusB family.

Functionally, involved in transcription antitermination. Required for transcription of ribosomal RNA (rRNA) genes. Binds specifically to the boxA antiterminator sequence of the ribosomal RNA (rrn) operons. This chain is Transcription antitermination protein NusB, found in Mycobacterium leprae (strain TN).